A 111-amino-acid chain; its full sequence is Cytochrome c (111 aa).

Ala1 is modified (N-acetylalanine). Residues Cys22, Cys25, and His26 each contribute to the heme c site. N6,N6,N6-trimethyllysine is present on Lys80. Met88 contributes to the heme c binding site. An N6,N6,N6-trimethyllysine modification is found at Lys94.

This sequence belongs to the cytochrome c family. Binds 1 heme c group covalently per subunit.

It localises to the mitochondrion intermembrane space. Electron carrier protein. The oxidized form of the cytochrome c heme group can accept an electron from the heme group of the cytochrome c1 subunit of cytochrome reductase. Cytochrome c then transfers this electron to the cytochrome oxidase complex, the final protein carrier in the mitochondrial electron-transport chain. The polypeptide is Cytochrome c (Cannabis sativa (Hemp)).